The primary structure comprises 968 residues: RNA polymerase-associated protein RapA (968 aa).

In terms of domain architecture, Helicase ATP-binding spans Asp-164–Asn-334. Residue Asp-177–Thr-184 coordinates ATP. The DEAH box signature appears at Asp-280–His-283. The Helicase C-terminal domain maps to Arg-490–Gly-662.

Belongs to the SNF2/RAD54 helicase family. RapA subfamily. Interacts with the RNAP. Has a higher affinity for the core RNAP than for the holoenzyme. Its ATPase activity is stimulated by binding to RNAP.

In terms of biological role, transcription regulator that activates transcription by stimulating RNA polymerase (RNAP) recycling in case of stress conditions such as supercoiled DNA or high salt concentrations. Probably acts by releasing the RNAP, when it is trapped or immobilized on tightly supercoiled DNA. Does not activate transcription on linear DNA. Probably not involved in DNA repair. The polypeptide is RNA polymerase-associated protein RapA (Shigella boydii serotype 18 (strain CDC 3083-94 / BS512)).